The following is a 232-amino-acid chain: 5'-methylthioadenosine/S-adenosylhomocysteine nucleosidase (232 aa).

Glutamate 12 acts as the Proton acceptor in catalysis. Substrate is bound by residues glycine 78, isoleucine 152, and 173 to 174 (ME). The Proton donor role is filled by aspartate 197.

This sequence belongs to the PNP/UDP phosphorylase family. MtnN subfamily. Homodimer.

It carries out the reaction S-adenosyl-L-homocysteine + H2O = S-(5-deoxy-D-ribos-5-yl)-L-homocysteine + adenine. The catalysed reaction is S-methyl-5'-thioadenosine + H2O = 5-(methylsulfanyl)-D-ribose + adenine. It catalyses the reaction 5'-deoxyadenosine + H2O = 5-deoxy-D-ribose + adenine. The protein operates within amino-acid biosynthesis; L-methionine biosynthesis via salvage pathway; S-methyl-5-thio-alpha-D-ribose 1-phosphate from S-methyl-5'-thioadenosine (hydrolase route): step 1/2. Catalyzes the irreversible cleavage of the glycosidic bond in both 5'-methylthioadenosine (MTA) and S-adenosylhomocysteine (SAH/AdoHcy) to adenine and the corresponding thioribose, 5'-methylthioribose and S-ribosylhomocysteine, respectively. Also cleaves 5'-deoxyadenosine, a toxic by-product of radical S-adenosylmethionine (SAM) enzymes, into 5-deoxyribose and adenine. Thus, is required for in vivo function of the radical SAM enzymes biotin synthase and lipoic acid synthase, that are inhibited by 5'-deoxyadenosine accumulation. This is 5'-methylthioadenosine/S-adenosylhomocysteine nucleosidase from Salmonella paratyphi A (strain ATCC 9150 / SARB42).